Here is an 851-residue protein sequence, read N- to C-terminus: Probable disease resistance protein At1g15890 (851 aa).

One can recognise an NB-ARC domain in the interval 139–441 (AEKIPAPKVE…CEGFIDGNED (303 aa)). 181–188 (GMGGVGKT) lines the ATP pocket. 5 LRR repeats span residues 514-535 (SLRR…SNSP), 536-557 (NLST…FFRF), 560-582 (ALVV…ISKL), 584-605 (SLQY…FKEL), and 607-629 (KLIH…ATSL).

The protein belongs to the disease resistance NB-LRR family.

Probable disease resistance protein. The sequence is that of Probable disease resistance protein At1g15890 from Arabidopsis thaliana (Mouse-ear cress).